The following is a 1291-amino-acid chain: Cytoplasmic FMR1-interacting protein (1291 aa).

The interval 1270–1291 (PSVISSSSHYQDPQKLRQSINN) is disordered. Residues 1271–1291 (SVISSSSHYQDPQKLRQSINN) show a composition bias toward polar residues.

It belongs to the CYFIP family. Interacts with Fmr1 and Rac1. Component of the WAVE complex composed of Hem/Kette, Scar/Wave and Cyfip where it binds through its C-terminus directly to Hem. As to expression, in the embryo, expressed mainly in the gut and in the developing central nervous system where high levels of expression are found in the CNS neuropile. Expression in the gut diminishes as development proceeds (at protein level). In the adult, expressed specifically in the nervous system.

The protein resides in the cytoplasm. Plays a role in guidance and morphology of central and peripheral axons and in synaptic morphology. Also required for formation of cell membrane protrusions and for bristle development. Plays a role in regulating mitochondrial activity, energy metabolism and membrane potential which maintains normal gamma-aminobutyric acid (GABA) signaling and ensures normal social behavior. The polypeptide is Cytoplasmic FMR1-interacting protein (Drosophila melanogaster (Fruit fly)).